A 138-amino-acid polypeptide reads, in one-letter code: Phospholipase A2 EC3 (138 aa).

An N-terminal signal peptide occupies residues M1 to G16. 7 disulfides stabilise this stretch: C42–C131, C44–C60, C59–C111, C65–C138, C66–C104, C73–C97, and C91–C102. Residues Y43, G45, and G47 each contribute to the Ca(2+) site. Residue H63 is part of the active site. D64 is a binding site for Ca(2+). Residue D105 is part of the active site.

It belongs to the phospholipase A2 family. Group II subfamily. The cofactor is Ca(2+).

The protein resides in the secreted. The catalysed reaction is a 1,2-diacyl-sn-glycero-3-phosphocholine + H2O = a 1-acyl-sn-glycero-3-phosphocholine + a fatty acid + H(+). Its function is as follows. PA2 catalyzes the calcium-dependent hydrolysis of the 2-acyl groups in 3-sn-phosphoglycerides. This chain is Phospholipase A2 EC3, found in Echis coloratus (Carpet viper).